The chain runs to 724 residues: Peroxidase mlt-7 (724 aa).

Residues 1-24 form the signal peptide; sequence MRRLHRNLSLLFLICILNEYRIES. Residue Asn-7 is glycosylated (N-linked (GlcNAc...) asparagine). Positions 25–178 are excised as a propeptide; that stretch reads QTLSPPITDR…GCVPQLSDVG (154 aa). The 35-residue stretch at 42 to 76 folds into the ShKT domain; it reads CCDHHEWCRFWASIGECNANKDWMTENCQLACGTC. An intrachain disulfide couples Cys-181 to Cys-198. N-linked (GlcNAc...) asparagine glycosylation occurs at Asn-233. His-271 functions as the Proton acceptor in the catalytic mechanism. Residue Asp-272 coordinates Ca(2+). An intrachain disulfide couples Cys-284 to Cys-294. 4 residues coordinate Ca(2+): Thr-335, Tyr-337, Asp-339, and Ser-341. Position 493 (His-493) interacts with heme b. 2 N-linked (GlcNAc...) asparagine glycosylation sites follow: Asn-509 and Asn-617. 2 cysteine pairs are disulfide-bonded: Cys-588–Cys-645 and Cys-686–Cys-710.

This sequence belongs to the peroxidase family. Requires heme b as cofactor. As to expression, expressed in the hypodermal cells, specifically the head and seam/body.

The catalysed reaction is 2 a phenolic donor + H2O2 = 2 a phenolic radical donor + 2 H2O. Functionally, plays an essential role in cuticle biogenesis. Required in combination with bli-3 for correct formation of cross-links in cuticle collagens. In Caenorhabditis elegans, this protein is Peroxidase mlt-7.